We begin with the raw amino-acid sequence, 255 residues long: uncharacterized protein (255 aa).

Residues 1–23 (MKRLNKLVLGIIFLFLVISITAG) form the signal peptide. C24 carries N-palmitoyl cysteine lipidation. A lipid anchor (S-diacylglycerol cysteine) is attached at C24.

Belongs to the staphylococcal tandem lipoprotein family.

The protein resides in the cell membrane. This is an uncharacterized protein from Staphylococcus aureus (strain USA300).